Reading from the N-terminus, the 473-residue chain is H(+)/Cl(-) exchange transporter ClcA (473 aa).

At 1–32 (MKTDTPSLEIPQAARLRRRQLIRQLLERDKTP) the chain is on the cytoplasmic side. A helical membrane pass occupies residues 33-69 (LAILFMAAVVGTLVGLAAVAFDKGVSWLQNQRMGALV). Over 70 to 76 (HTADNYP) the chain is Periplasmic. A helical membrane pass occupies residues 77-100 (LLLTVAFLCSAVLAMFGYFLVRKY). A Selectivity filter part_1 motif is present at residues 106-110 (GSGIP). Ser-107 contributes to the chloride binding site. The helical intramembrane region spans 109 to 116 (IPEIEGAL). At 117–123 (EDQRPVR) the chain is on the cytoplasmic side. 2 helical membrane-spanning segments follow: residues 124–141 (WWRV…TLGG) and 148–166 (EGPT…LDIF). The short motif at 146-150 (GREGP) is the Selectivity filter part_2 element. At 167–176 (RLKGDEARHT) the chain is on the cytoplasmic side. 2 intramembrane regions (helical) span residues 177–189 (LLAT…LAAA) and 193–201 (PLAGILFII). Residues 202-214 (EEMRPQFRYTLIS) are Cytoplasmic-facing. A helical transmembrane segment spans residues 215–232 (IKAVFIGVIMSTIMYRIF). At 233-252 (NHEVALIDVGKLSDAPLNTL) the chain is on the periplasmic side. A helical membrane pass occupies residues 253–281 (WLYLILGIIFGIFGPIFNKWVLGMQDLLH). At 282-287 (RVHGGN) the chain is on the cytoplasmic side. Residues 288 to 309 (ITKWVIMGGAIGGLCGLLGFVA) traverse the membrane as a helical segment. Residues 310–329 (PATSGGGFNLIPIATAGNFS) are Periplasmic-facing. A run of 2 helical transmembrane segments spans residues 330-349 (MGML…LCFS) and 355-376 (GIFA…MVAV). The Selectivity filter part_3 signature appears at 355–359 (GIFAP). 2 residues coordinate chloride: Ile-356 and Phe-357. Topologically, residues 377 to 386 (ELFPQYHLEA) are periplasmic. Residues 387-401 (GTFAIAGMGALLAAS) constitute an intramembrane region (helical). The segment at residues 402–404 (IRA) is an intramembrane region (note=Loop between two helices). The segment at residues 405–416 (PLTGIILVLEMT) is an intramembrane region (helical). Positions 417-421 (DNYQL) form an intramembrane region, note=Loop between two helices. A helical transmembrane segment spans residues 422–438 (ILPMIITGLGATLLAQF). Over 439–473 (TGGKPLYSAILARTLAKQEAEQLARSKAASASENT) the chain is Cytoplasmic. Residue Tyr-445 coordinates chloride.

The protein belongs to the chloride channel (TC 2.A.49) family. ClcA subfamily. In terms of assembly, homodimer.

Its subcellular location is the cell inner membrane. It catalyses the reaction 2 chloride(in) + H(+)(out) = 2 chloride(out) + H(+)(in). Proton-coupled chloride transporter. Functions as antiport system and exchanges two chloride ions for 1 proton. Probably acts as an electrical shunt for an outwardly-directed proton pump that is linked to amino acid decarboxylation, as part of the extreme acid resistance (XAR) response. The protein is H(+)/Cl(-) exchange transporter ClcA of Escherichia fergusonii (strain ATCC 35469 / DSM 13698 / CCUG 18766 / IAM 14443 / JCM 21226 / LMG 7866 / NBRC 102419 / NCTC 12128 / CDC 0568-73).